The chain runs to 122 residues: Fluoride-specific ion channel FluC (122 aa).

The next 4 helical transmembrane spans lie at 5–25 (FLIG…SGII), 29–49 (FGIP…VGFL), 65–85 (FIIT…YESF), and 93–113 (FIKS…MIYF). Glycine 72 and threonine 75 together coordinate Na(+).

This sequence belongs to the fluoride channel Fluc/FEX (TC 1.A.43) family.

Its subcellular location is the cell membrane. It carries out the reaction fluoride(in) = fluoride(out). Na(+) is not transported, but it plays an essential structural role and its presence is essential for fluoride channel function. Fluoride-specific ion channel. Important for reducing fluoride concentration in the cell, thus reducing its toxicity. The sequence is that of Fluoride-specific ion channel FluC from Methanococcus vannielii (strain ATCC 35089 / DSM 1224 / JCM 13029 / OCM 148 / SB).